A 1433-amino-acid polypeptide reads, in one-letter code: CAP-Gly domain-containing linker protein 1 (1433 aa).

The segment at 1-51 is disordered; it reads MSMLKPSGLKAPSKTIKHGSTLLKAPASVATAPAEKAPSSEKSSSTTTADA. Over residues 32–49 the composition is skewed to low complexity; it reads APAEKAPSSEKSSSTTTA. Positions 79–121 constitute a CAP-Gly 1 domain; the sequence is GETQFAPGQWAGIVLDEPIGKNDGSVAGVRYFQCEPLRGIFTR. A disordered region spans residues 133-208; sequence DEANGTQTAH…VSNLSEAGSL (76 aa). The span at 140 to 168 shows a compositional bias: low complexity; sequence TAHASRATSPTSTSTASAVSASPAALLPS. The segment covering 184–204 has biased composition (polar residues); the sequence is TPSQFSNLSKTASGSVSNLSE. Positions 235–277 constitute a CAP-Gly 2 domain; sequence GETDFAKGEWCGVELDEPLGKNDGAVAGTRYFQCQPRYGLFAP. Over residues 319–333 the composition is skewed to low complexity; that stretch reads SLSSVASSVSSKPSR. The segment at 319-338 is disordered; that stretch reads SLSSVASSVSSKPSRTGLLT. Residues 351-1353 are a coiled coil; sequence TTALQEALKE…CEAALNGNEE (1003 aa). Residues 1412 to 1429 form a CCHC-type zinc finger; sequence PYCDTCEMFGHWTADCND.

Its subcellular location is the cytoplasm. It localises to the cytoskeleton. The protein resides in the cytoplasmic vesicle membrane. It is found in the cell projection. The protein localises to the ruffle. Binds to the plus end of microtubules and regulates the dynamics of the microtubule cytoskeleton. Promotes microtubule growth and microtubule bundling. Links cytoplasmic vesicles to microtubules and thereby plays an important role in intracellular vesicle trafficking. Plays a role macropinocytosis and endosome trafficking. This chain is CAP-Gly domain-containing linker protein 1 (CLIP1), found in Gallus gallus (Chicken).